Reading from the N-terminus, the 172-residue chain is Adenine phosphoribosyltransferase (172 aa).

The protein belongs to the purine/pyrimidine phosphoribosyltransferase family. In terms of assembly, homodimer.

The protein resides in the cytoplasm. The catalysed reaction is AMP + diphosphate = 5-phospho-alpha-D-ribose 1-diphosphate + adenine. It participates in purine metabolism; AMP biosynthesis via salvage pathway; AMP from adenine: step 1/1. Catalyzes a salvage reaction resulting in the formation of AMP, that is energically less costly than de novo synthesis. The protein is Adenine phosphoribosyltransferase of Staphylococcus aureus (strain Mu3 / ATCC 700698).